A 1237-amino-acid chain; its full sequence is uncharacterized protein (1237 aa).

The 122-residue stretch at 591 to 712 (KDMLEIYSDL…IVLSKYTQWT (122 aa)) folds into the MHD1 domain. The region spanning 786 to 906 (LIEALDVAES…GDYLPREEWF (121 aa)) is the C2 domain. An MHD2 domain is found at 1014–1130 (EAAIYELLDY…KPTDFLLQEC (117 aa)).

This is an uncharacterized protein from Schizosaccharomyces pombe (strain 972 / ATCC 24843) (Fission yeast).